The sequence spans 295 residues: Putative sugar uptake protein YxfA (295 aa).

A run of 10 helical transmembrane segments spans residues 4–26 (VLLA…KFGG), 33–50 (LGMT…FLFR), 54–72 (LTWQ…WAIG), 85–107 (VSVA…GVFA), 117–135 (FILG…YFSA), 156–178 (ALTY…AVLW), 188–206 (IILP…MGRF), 213–235 (YVYQ…LMAA), 241–263 (AIAF…LFLG), and 270–291 (ELVY…LAIV).

It belongs to the GRP transporter (TC 2.A.7.5) family.

It localises to the cell membrane. The polypeptide is Putative sugar uptake protein YxfA (yxfA) (Lactococcus lactis subsp. lactis (strain IL1403) (Streptococcus lactis)).